The primary structure comprises 485 residues: Programmed cell death protein 7 (485 aa).

The segment at 1-133 (MALPPFFGQG…EAPPPPADVL (133 aa)) is disordered. Over residues 12–48 (PGPPPPQPPPPAPFGCPPPPLPSPAFPPPLPQRPGPF) the composition is skewed to pro residues. Residues 49-71 (PGASAPFLQPPLALQPRASAEAS) show a composition bias toward low complexity. Composition is skewed to pro residues over residues 82–96 (PVPP…PQCR) and 109–130 (PPPP…PPPA). 2 coiled-coil regions span residues 232-335 (VGEA…AAAR) and 362-411 (RSEL…ESKL).

In terms of assembly, interacts with RBM40. Component of the U11/U12 snRNPs that are part of the U12-type spliceosome.

The protein resides in the nucleus. Its function is as follows. Promotes apoptosis when overexpressed. This Homo sapiens (Human) protein is Programmed cell death protein 7 (PDCD7).